The sequence spans 371 residues: Cathepsin L1 (371 aa).

The first 48 residues, 1–48, serve as a signal peptide directing secretion; sequence MNHLGVFETRFRPRTRHKSQRAQLIPEQITMRTAVLLPLLALLAVAQA. The propeptide at 49–153 is activation peptide; sequence VSFADVVMEE…VTFISPAHVT (105 aa). N-linked (GlcNAc...) asparagine glycosylation is present at Asn127. Cystine bridges form between Cys175–Cys218, Cys209–Cys251, and Cys310–Cys360. The active site involves Cys178. The active site involves His317. Positions 327 to 329 are excised as a propeptide; that stretch reads DES. Residue Asn338 is part of the active site.

The protein belongs to the peptidase C1 family. In terms of assembly, dimer of a heavy and a light chain linked by disulfide bonds. In the embryo, predominantly expressed in the midgut. Also expressed in larval alimentary organs such as salivary gland and midgut including gastric caeca.

It localises to the lysosome. It carries out the reaction Specificity close to that of papain. As compared to cathepsin B, cathepsin L exhibits higher activity toward protein substrates, but has little activity on Z-Arg-Arg-NHMec, and no peptidyl-dipeptidase activity.. Functionally, important for the overall degradation of proteins in lysosomes. Essential for adult male and female fertility. May play a role in digestion. This chain is Cathepsin L1, found in Drosophila melanogaster (Fruit fly).